Reading from the N-terminus, the 278-residue chain is Dermonecrotic toxin LhSicTox-alphaIV1iii (278 aa).

His-5 is a catalytic residue. Positions 25 and 27 each coordinate Mg(2+). His-41 functions as the Nucleophile in the catalytic mechanism. 2 disulfide bridges follow: Cys-45/Cys-51 and Cys-47/Cys-192. Residue Asp-85 participates in Mg(2+) binding.

Belongs to the arthropod phospholipase D family. Class II subfamily. Requires Mg(2+) as cofactor. In terms of tissue distribution, expressed by the venom gland.

The protein localises to the secreted. It carries out the reaction an N-(acyl)-sphingosylphosphocholine = an N-(acyl)-sphingosyl-1,3-cyclic phosphate + choline. It catalyses the reaction an N-(acyl)-sphingosylphosphoethanolamine = an N-(acyl)-sphingosyl-1,3-cyclic phosphate + ethanolamine. The enzyme catalyses a 1-acyl-sn-glycero-3-phosphocholine = a 1-acyl-sn-glycero-2,3-cyclic phosphate + choline. The catalysed reaction is a 1-acyl-sn-glycero-3-phosphoethanolamine = a 1-acyl-sn-glycero-2,3-cyclic phosphate + ethanolamine. In terms of biological role, dermonecrotic toxins cleave the phosphodiester linkage between the phosphate and headgroup of certain phospholipids (sphingolipid and lysolipid substrates), forming an alcohol (often choline) and a cyclic phosphate. This toxin acts on sphingomyelin (SM). It may also act on ceramide phosphoethanolamine (CPE), lysophosphatidylcholine (LPC) and lysophosphatidylethanolamine (LPE), but not on lysophosphatidylserine (LPS), and lysophosphatidylglycerol (LPG). It acts by transphosphatidylation, releasing exclusively cyclic phosphate products as second products. Induces dermonecrosis, hemolysis, increased vascular permeability, edema, inflammatory response, and platelet aggregation. This chain is Dermonecrotic toxin LhSicTox-alphaIV1iii, found in Loxosceles hirsuta (Recluse spider).